The sequence spans 2381 residues: Protein Ycf2 (2381 aa).

1655–1662 is a binding site for ATP; that stretch reads GPMETGRS.

It belongs to the Ycf2 family.

It is found in the plastid. The protein resides in the chloroplast stroma. Functionally, probable ATPase of unknown function. Its presence in a non-photosynthetic plant (Epifagus virginiana) and experiments in tobacco indicate that it has an essential function which is probably not related to photosynthesis. This Angiopteris evecta (Mule's foot fern) protein is Protein Ycf2.